The following is a 160-amino-acid chain: Lipoprotein signal peptidase (160 aa).

The next 2 membrane-spanning stretches (helical) occupy residues 59 to 79 (PEGILLLALAISAGLTWYVWI) and 84 to 104 (SPLFILTFALILGGGLGNLID). Active-site residues include Asp113 and Asp139. A helical transmembrane segment spans residues 132 to 152 (WPIFNIADACITIGACLLFFF).

Belongs to the peptidase A8 family.

The protein resides in the cell inner membrane. The enzyme catalyses Release of signal peptides from bacterial membrane prolipoproteins. Hydrolyzes -Xaa-Yaa-Zaa-|-(S,diacylglyceryl)Cys-, in which Xaa is hydrophobic (preferably Leu), and Yaa (Ala or Ser) and Zaa (Gly or Ala) have small, neutral side chains.. The protein operates within protein modification; lipoprotein biosynthesis (signal peptide cleavage). This protein specifically catalyzes the removal of signal peptides from prolipoproteins. This is Lipoprotein signal peptidase from Chlorobaculum parvum (strain DSM 263 / NCIMB 8327) (Chlorobium vibrioforme subsp. thiosulfatophilum).